A 152-amino-acid chain; its full sequence is MKTPIELKILDSRIGTQFPLPAYATLGSAGMDLRAITDIALTIQPGETVLIPTGIAVHVADPSLAAIILPRSGLGHKHGIVLGNLVGLIDSDYQGPLMVSCWNRGSEPFTIEIGDRLAQLVFVPVVQAEFKLVDEFDSSDRGAGGFGHSGTK.

Substrate is bound by residues 71–73, N84, 88–90, and M98; these read RSG and LID.

Belongs to the dUTPase family. It depends on Mg(2+) as a cofactor.

It carries out the reaction dUTP + H2O = dUMP + diphosphate + H(+). It participates in pyrimidine metabolism; dUMP biosynthesis; dUMP from dCTP (dUTP route): step 2/2. Functionally, this enzyme is involved in nucleotide metabolism: it produces dUMP, the immediate precursor of thymidine nucleotides and it decreases the intracellular concentration of dUTP so that uracil cannot be incorporated into DNA. This is Deoxyuridine 5'-triphosphate nucleotidohydrolase from Shewanella piezotolerans (strain WP3 / JCM 13877).